The primary structure comprises 489 residues: Fumarate reductase (CoM/CoB) subunit B (489 aa).

The 2Fe-2S ferredoxin-type domain maps to 2–89 (INVKVLRFEP…GAVIEPVDLP (88 aa)). The [2Fe-2S] cluster site is built by Cys-53, Cys-58, Cys-61, and Cys-73. 2 consecutive 4Fe-4S ferredoxin-type domains span residues 124 to 158 (PEDY…YAGP) and 178 to 209 (AAGG…PGDA). [4Fe-4S] cluster is bound by residues Cys-136, Cys-139, Cys-142, Cys-146, Cys-189, Cys-192, Cys-195, and Cys-199.

In terms of assembly, subunit B of the heterodimeric fumarate reductase of methanogenic Archaea, composed of subunits A (TfrA) and B (TfrB). [2Fe-2S] cluster is required as a cofactor. Requires [4Fe-4S] cluster as cofactor.

It localises to the cytoplasm. It catalyses the reaction coenzyme B + coenzyme M + fumarate = coenzyme M-coenzyme B heterodisulfide + succinate. Its function is as follows. Catalyzes the reduction of fumarate with reduced coenzyme M (CoM-S-H) and coenzyme B (CoB-S-H). In vitro, is able to reduces fumarate with reduced benzyl viologen, oxidize CoM-S-H and CoB-S-H to CoM-S-S-CoB with methylene blue, and reduce CoM-S-S-CoB with reduced benzyl viologen. The enzyme has specificity for the two thiol compounds as the CoB--CoM heterodisulfide reductase. The enzyme is very sensitive to oxygen. The polypeptide is Fumarate reductase (CoM/CoB) subunit B (Methanothermobacter marburgensis (strain ATCC BAA-927 / DSM 2133 / JCM 14651 / NBRC 100331 / OCM 82 / Marburg) (Methanobacterium thermoautotrophicum)).